We begin with the raw amino-acid sequence, 3005 residues long: Highly reducing polyketide synthase AFT9-1 (3005 aa).

A Ketosynthase family 3 (KS3) domain is found at 1-337; sequence MDPQQRLLLE…GTNAHAILER (337 aa). Residues cysteine 87, histidine 222, and histidine 260 each act as for beta-ketoacyl synthase activity in the active site. The interval 437–751 is malonyl-CoA:ACP transacylase (MAT) domain; the sequence is VFTGQGAQWP…SYMSALVRGS (315 aa). The interval 821–936 is N-terminal hotdog fold; that stretch reads HDLLGLKMTD…GSVEVKYAAA (116 aa). The segment at 821–1114 is dehydratase (DH) domain; sequence HDLLGLKMTD…SGLELRRLAP (294 aa). The 298-residue stretch at 821–1118 folds into the PKS/mFAS DH domain; that stretch reads HDLLGLKMTD…LRRLAPTGQP (298 aa). Residue histidine 853 is the Proton acceptor; for dehydratase activity of the active site. Residues 963-1118 form a C-terminal hotdog fold region; that stretch reads IEKISSQELY…LRRLAPTGQP (156 aa). Aspartate 1028 (proton donor; for dehydratase activity) is an active-site residue. The tract at residues 1259-1445 is methyltransferase (CMet) domain; the sequence is ADDSSKRCYD…MRKASLNMQL (187 aa). The segment at 1683–1985 is enoyl reductase (ER) (ER) domain; that stretch reads EFMKMPVFTE…QHHRNESTVL (303 aa). The ketoreductase (KR) domain stretch occupies residues 2008 to 2191; sequence ATYVVSGGRG…YMSLNVGTIE (184 aa). The 83-residue stretch at 2293-2375 folds into the Carrier domain; the sequence is TRDFEKISQL…SLGAKVASRS (83 aa). The residue at position 2335 (serine 2335) is an O-(pantetheine 4'-phosphoryl)serine.

Its pathway is mycotoxin biosynthesis. Its function is as follows. Highly reducing polyketide synthase; part of the gene clusters that mediate the biosynthesis of the host-selective toxins (HSTs) AF-toxins responsible for Alternaria black spot of strawberry disease by the strawberry pathotype. AF-toxin I and III are valine derivatives of 2,3-dyhydroxy-isovaleric acid and 2-hydroxy-isovaleric acid respectively, while AF II is an isoleucine derivative of 2-hydroxy-valeric acid. These derivatives are bound to a 9,10-epoxy-8-hydroxy-9-methyl-decatrienoic acid (EDA) moiety. On cellular level, AF-toxins affect plasma membrane of susceptible cells and cause a sudden increase in loss of K(+) after a few minutes of toxin treatment. The aldo-keto reductase AFTS1 catalyzes the conversion of 2-keto-isovaleric acid (2-KIV) to 2-hydroxy-isovaleric acid (2-HIV) by reduction of its ketone to an alcohol. The acyl-CoA ligase AFT1, the hydrolase AFT2 and the enoyl-CoA hydratases AFT3 and AFT6, but also the polyketide synthase AFT9, the acyl-CoA dehydrogenase AFT10, the cytochrome P450 monooxygenase AFT11 and the oxidoreductase AFT12 are all involved in the biosynthesis of the AK-, AF- and ACT-toxin common EDA structural moiety. The exact function of each enzyme, and of additional enzymes identified within the AF-toxin clusters have still to be determined. This is Highly reducing polyketide synthase AFT9-1 from Alternaria alternata (Alternaria rot fungus).